We begin with the raw amino-acid sequence, 517 residues long: Crotonobetaine/carnitine--CoA ligase (517 aa).

It belongs to the ATP-dependent AMP-binding enzyme family.

It carries out the reaction 4-(trimethylamino)butanoate + ATP + CoA = 4-(trimethylamino)butanoyl-CoA + AMP + diphosphate. It catalyses the reaction crotonobetaine + ATP + CoA = crotonobetainyl-CoA + AMP + diphosphate. The enzyme catalyses (R)-carnitine + ATP + CoA = (R)-carnitinyl-CoA + AMP + diphosphate. The protein operates within amine and polyamine metabolism; carnitine metabolism. Functionally, catalyzes the transfer of CoA to carnitine, generating the initial carnitinyl-CoA needed for the CaiB reaction cycle. Also has activity toward crotonobetaine and gamma-butyrobetaine. The sequence is that of Crotonobetaine/carnitine--CoA ligase from Salmonella typhi.